The following is a 426-amino-acid chain: Histidinol dehydrogenase (426 aa).

Residues Tyr130, Gln187, and Asn210 each contribute to the NAD(+) site. Ser233, Gln255, and His258 together coordinate substrate. Gln255 and His258 together coordinate Zn(2+). Active-site proton acceptor residues include Glu323 and His324. His324, Asp357, Glu411, and His416 together coordinate substrate. Residue Asp357 participates in Zn(2+) binding. His416 contributes to the Zn(2+) binding site.

This sequence belongs to the histidinol dehydrogenase family. Zn(2+) is required as a cofactor.

It catalyses the reaction L-histidinol + 2 NAD(+) + H2O = L-histidine + 2 NADH + 3 H(+). Its pathway is amino-acid biosynthesis; L-histidine biosynthesis; L-histidine from 5-phospho-alpha-D-ribose 1-diphosphate: step 9/9. Functionally, catalyzes the sequential NAD-dependent oxidations of L-histidinol to L-histidinaldehyde and then to L-histidine. This is Histidinol dehydrogenase (hisD) from Aquifex aeolicus (strain VF5).